A 212-amino-acid polypeptide reads, in one-letter code: Kynurenine formamidase (212 aa).

Position 17 (Trp17) interacts with substrate. Residues His48, His52, and Asp54 each coordinate Zn(2+). The active-site Proton donor/acceptor is His58. Zn(2+)-binding residues include His161 and Glu173.

It belongs to the Cyclase 1 superfamily. KynB family. As to quaternary structure, homodimer. Zn(2+) is required as a cofactor.

The enzyme catalyses N-formyl-L-kynurenine + H2O = L-kynurenine + formate + H(+). The protein operates within amino-acid degradation; L-tryptophan degradation via kynurenine pathway; L-kynurenine from L-tryptophan: step 2/2. Its function is as follows. Catalyzes the hydrolysis of N-formyl-L-kynurenine to L-kynurenine, the second step in the kynurenine pathway of tryptophan degradation. This chain is Kynurenine formamidase, found in Salinibacter ruber (strain DSM 13855 / M31).